The chain runs to 590 residues: Aspartate--tRNA(Asp/Asn) ligase (590 aa).

Glu176 contributes to the L-aspartate binding site. The aspartate stretch occupies residues 200–203 (QLFK). The L-aspartate site is built by Arg222 and His451. An ATP-binding site is contributed by 222–224 (RDE). An ATP-binding site is contributed by Glu485. Residue Arg492 participates in L-aspartate binding. Residue 537–540 (GIDR) participates in ATP binding.

The protein belongs to the class-II aminoacyl-tRNA synthetase family. Type 1 subfamily. In terms of assembly, homodimer.

Its subcellular location is the cytoplasm. It carries out the reaction tRNA(Asx) + L-aspartate + ATP = L-aspartyl-tRNA(Asx) + AMP + diphosphate. Its function is as follows. Aspartyl-tRNA synthetase with relaxed tRNA specificity since it is able to aspartylate not only its cognate tRNA(Asp) but also tRNA(Asn). Reaction proceeds in two steps: L-aspartate is first activated by ATP to form Asp-AMP and then transferred to the acceptor end of tRNA(Asp/Asn). In Ehrlichia chaffeensis (strain ATCC CRL-10679 / Arkansas), this protein is Aspartate--tRNA(Asp/Asn) ligase.